Reading from the N-terminus, the 168-residue chain is Large ribosomal subunit protein uL10 (168 aa).

This sequence belongs to the universal ribosomal protein uL10 family. In terms of assembly, part of the ribosomal stalk of the 50S ribosomal subunit. The N-terminus interacts with L11 and the large rRNA to form the base of the stalk. The C-terminus forms an elongated spine to which L12 dimers bind in a sequential fashion forming a multimeric L10(L12)X complex.

Forms part of the ribosomal stalk, playing a central role in the interaction of the ribosome with GTP-bound translation factors. The protein is Large ribosomal subunit protein uL10 of Levilactobacillus brevis (strain ATCC 367 / BCRC 12310 / CIP 105137 / JCM 1170 / LMG 11437 / NCIMB 947 / NCTC 947) (Lactobacillus brevis).